A 655-amino-acid polypeptide reads, in one-letter code: p-hydroxybenzoic acid efflux pump subunit AaeB (655 aa).

11 helical membrane-spanning segments follow: residues 13 to 33, 38 to 58, 69 to 89, 93 to 113, 121 to 141, 152 to 172, 370 to 390, 407 to 427, 431 to 451, 459 to 479, and 482 to 502; these read FAVKLATAIVLALFVGFHFQL, WAVLTAAIVAAGPAFAAGGEP, LRIIGTFIGCIAGLVIIIAMI, LLMILVCCIWAGFCTWISSLV, WGLAGYTALIIVITIQPEPLL, EIVIGIVCAIMADLLFSPRSI, LFWLWTGWTSGSGAMVMIAVV, FIYGTLAALPLGLLYFLVIIP, QSMLLLCISLAVLGFFLGIEV, MGALASTINIIVLDNPMTFHF, and FLDSALGQIVGCVLAFTVILL.

The protein belongs to the aromatic acid exporter ArAE (TC 2.A.85) family.

It is found in the cell inner membrane. Its function is as follows. Forms an efflux pump with AaeA. Could function as a metabolic relief valve, allowing to eliminate certain compounds when they accumulate to high levels in the cell. The polypeptide is p-hydroxybenzoic acid efflux pump subunit AaeB (Escherichia coli (strain K12 / MC4100 / BW2952)).